Consider the following 674-residue polypeptide: RNA polymerase sigma factor RpoD (674 aa).

The segment at 214-252 is disordered; that stretch reads AEGAAPAARRPASDEPEYDADGNPISRIDEEEDDDDSSN. The sigma-70 factor domain-2 stretch occupies residues 440–510; the sequence is MVEANLRLVI…TRSIADQART (71 aa). An Interaction with polymerase core subunit RpoC motif is present at residues 464–467; sequence DLIQ. Positions 519–595 are sigma-70 factor domain-3; the sequence is ETINKLVRTG…DKNAILPLDS (77 aa). The segment at 608–661 is sigma-70 factor domain-4; sequence VLASLTPREERVLRMRFGIGMNTDHTLEEVGQQFSVTRERIRQIEAKALRKLKH. The H-T-H motif DNA-binding region spans 634–653; the sequence is LEEVGQQFSVTRERIRQIEA.

The protein belongs to the sigma-70 factor family. RpoD/SigA subfamily. As to quaternary structure, interacts transiently with the RNA polymerase catalytic core.

Its subcellular location is the cytoplasm. Sigma factors are initiation factors that promote the attachment of RNA polymerase to specific initiation sites and are then released. This sigma factor is the primary sigma factor during exponential growth. The sequence is that of RNA polymerase sigma factor RpoD from Rhodobacter capsulatus (strain ATCC BAA-309 / NBRC 16581 / SB1003).